Consider the following 115-residue polypeptide: Promotilin (115 aa).

An N-terminal signal peptide occupies residues 1-25; that stretch reads MVSRKAVAALLVVHVAAMLASQTEA. Positions 39-72 are disordered; the sequence is QEKERNKGQKKSLSVWQRSGEEGPVDPAEPIREE.

The protein belongs to the motilin family.

It is found in the secreted. Functionally, plays an important role in the regulation of interdigestive gastrointestinal motility and indirectly causes rhythmic contraction of duodenal and colonic smooth muscle. This is Promotilin (MLN) from Homo sapiens (Human).